The chain runs to 507 residues: ATP synthase subunit alpha, chloroplastic (507 aa).

170–177 (GDRQTGKA) contacts ATP.

It belongs to the ATPase alpha/beta chains family. F-type ATPases have 2 components, CF(1) - the catalytic core - and CF(0) - the membrane proton channel. CF(1) has five subunits: alpha(3), beta(3), gamma(1), delta(1), epsilon(1). CF(0) has four main subunits: a, b, b' and c.

Its subcellular location is the plastid. It is found in the chloroplast thylakoid membrane. It catalyses the reaction ATP + H2O + 4 H(+)(in) = ADP + phosphate + 5 H(+)(out). Produces ATP from ADP in the presence of a proton gradient across the membrane. The alpha chain is a regulatory subunit. In Calycanthus floridus var. glaucus (Eastern sweetshrub), this protein is ATP synthase subunit alpha, chloroplastic.